We begin with the raw amino-acid sequence, 338 residues long: Nicotinate-nucleotide--dimethylbenzimidazole phosphoribosyltransferase (338 aa).

Glu305 functions as the Proton acceptor in the catalytic mechanism.

It belongs to the CobT family.

The catalysed reaction is 5,6-dimethylbenzimidazole + nicotinate beta-D-ribonucleotide = alpha-ribazole 5'-phosphate + nicotinate + H(+). It participates in nucleoside biosynthesis; alpha-ribazole biosynthesis; alpha-ribazole from 5,6-dimethylbenzimidazole: step 1/2. In terms of biological role, catalyzes the synthesis of alpha-ribazole-5'-phosphate from nicotinate mononucleotide (NAMN) and 5,6-dimethylbenzimidazole (DMB). This chain is Nicotinate-nucleotide--dimethylbenzimidazole phosphoribosyltransferase, found in Rhizobium etli (strain ATCC 51251 / DSM 11541 / JCM 21823 / NBRC 15573 / CFN 42).